The chain runs to 292 residues: mRNA export protein 33 (292 aa).

The disordered stretch occupies residues 1–76; it reads MPPKKAAKGK…RKRREEEKRA (76 aa). 2 stretches are compositionally biased toward basic and acidic residues: residues 9–26 and 58–76; these read GKGD…KKAA and KDAK…EKRA. A C3H1-type zinc finger spans residues 134 to 172; that stretch reads INTDIVCKFFLEACETGKYGWLWQCPNGNMTCIYKHALP.

It localises to the cytoplasm. In terms of biological role, functions as a component of the nuclear pore complex (NPC). NPC components, collectively referred to as nucleoporins (NUPs), can play the role of both NPC structural components and of docking or interaction partners for transiently associated nuclear transport factors. Active directional transport is assured by both, a Phe-Gly (FG) repeat affinity gradient for these transport factors across the NPC and a transport cofactor concentration gradient across the nuclear envelope. Involved in the export of mRNA from the nucleus to the cytoplasm. May play a role in mitotic spindle formation and/or function. This is mRNA export protein 33 (mep33) from Schizosaccharomyces pombe (strain 972 / ATCC 24843) (Fission yeast).